Consider the following 255-residue polypeptide: Geranylgeranylglyceryl phosphate synthase (255 aa).

Residues D34 and T64 each coordinate Mg(2+). Sn-glycerol 1-phosphate contacts are provided by residues 182–188 (YLEAGSG), 213–214 (GG), and 235–236 (GN).

Belongs to the GGGP/HepGP synthase family. Group II subfamily. It depends on Mg(2+) as a cofactor.

The protein localises to the cytoplasm. The enzyme catalyses sn-glycerol 1-phosphate + (2E,6E,10E)-geranylgeranyl diphosphate = sn-3-O-(geranylgeranyl)glycerol 1-phosphate + diphosphate. The protein operates within membrane lipid metabolism; glycerophospholipid metabolism. Prenyltransferase that catalyzes the transfer of the geranylgeranyl moiety of geranylgeranyl diphosphate (GGPP) to the C3 hydroxyl of sn-glycerol-1-phosphate (G1P). This reaction is the first ether-bond-formation step in the biosynthesis of archaeal membrane lipids. This Saccharolobus islandicus (strain M.14.25 / Kamchatka #1) (Sulfolobus islandicus) protein is Geranylgeranylglyceryl phosphate synthase.